The following is a 507-amino-acid chain: Probable aldehyde dehydrogenase (507 aa).

219–225 lines the NAD(+) pocket; sequence GFGAEAG. Active-site residues include E263 and C302.

The protein belongs to the aldehyde dehydrogenase family.

The enzyme catalyses an aldehyde + NAD(+) + H2O = a carboxylate + NADH + 2 H(+). This Mycobacterium bovis (strain ATCC BAA-935 / AF2122/97) protein is Probable aldehyde dehydrogenase.